The chain runs to 336 residues: GTPase Obg (336 aa).

One can recognise an Obg domain in the interval 1–159 (MKFLDETKVY…KTIWLRLKLI (159 aa)). Residues 160 to 327 (ADAGLVGLPN…ALRALRSVIA (168 aa)) enclose the OBG-type G domain. Residues 166-173 (GLPNAGKS), 191-195 (FTTLH), 212-215 (DIPG), 279-282 (SQID), and 308-310 (SAV) each bind GTP. Mg(2+)-binding residues include S173 and T193.

The protein belongs to the TRAFAC class OBG-HflX-like GTPase superfamily. OBG GTPase family. Monomer. Mg(2+) is required as a cofactor.

Its subcellular location is the cytoplasm. Functionally, an essential GTPase which binds GTP, GDP and possibly (p)ppGpp with moderate affinity, with high nucleotide exchange rates and a fairly low GTP hydrolysis rate. Plays a role in control of the cell cycle, stress response, ribosome biogenesis and in those bacteria that undergo differentiation, in morphogenesis control. This Rhizobium meliloti (strain 1021) (Ensifer meliloti) protein is GTPase Obg.